A 1501-amino-acid chain; its full sequence is Neither inactivation nor afterpotential protein C (1501 aa).

Residues 16-282 enclose the Protein kinase domain; that stretch reads FEIYEEIAQG…MVEMVEHPFL (267 aa). Residues 22–30 and lysine 45 contribute to the ATP site; that span reads IAQGVNAKV. Aspartate 145 serves as the catalytic Proton acceptor. At serine 183 the chain carries Phosphoserine. The Myosin motor domain occupies 332 to 1037; that stretch reads MYPEDLAALE…FLARLYELQV (706 aa). The interval 913-934 is actin-binding; the sequence is LTLLKMLSQNANLGVHFVRCIR. IQ domains follow at residues 1036–1065 and 1072–1101; these read QVKK…FKLG and HDVA…EKSG. The segment at 1043–1271 is interaction with rtp; sequence VQSMMRALLA…RMGESDNIYN (229 aa). The non alpha-helical, C-terminal domain stretch occupies residues 1066–1501; sequence KKGPEHHDVA…ITLSGYAVDI (436 aa). Disordered stretches follow at residues 1308–1364 and 1390–1473; these read NWGV…DPVR and KTNY…EDSN. The span at 1326 to 1335 shows a compositional bias: pro residues; that stretch reads APPPPPPPMP. A compositionally biased stretch (low complexity) spans 1336-1358; it reads SSNYYRNNPNQQQRNYQQRSSYP. The segment covering 1405–1414 has biased composition (basic and acidic residues); that stretch reads NNRRGSDSGD. Residues 1449–1463 are compositionally biased toward polar residues; the sequence is FGQQQRAPTLRQSPA.

The protein in the C-terminal section; belongs to the TRAFAC class myosin-kinesin ATPase superfamily. Myosin family. It in the N-terminal section; belongs to the protein kinase superfamily. Ser/Thr protein kinase family. In terms of assembly, interacts with rtp. In terms of tissue distribution, expressed in the phototransducing compartment of photoreceptor cells, the rhabdomeres (at protein level).

It is found in the cytoplasm. It localises to the cytoskeleton. The protein resides in the nucleus. The protein localises to the membrane. Its subcellular location is the cell projection. It is found in the rhabdomere membrane. The enzyme catalyses L-seryl-[protein] + ATP = O-phospho-L-seryl-[protein] + ADP + H(+). The catalysed reaction is L-threonyl-[protein] + ATP = O-phospho-L-threonyl-[protein] + ADP + H(+). Functionally, required for photoreceptor cell function. The ninaC proteins combines putative serine/threonine-protein kinase and myosin activities. Essential for the expression and stability of the rtp protein in the photoreceptors. The rtp/ninaC complex is required for stability of inad and inac and the normal termination of phototransduction in the retina. The chain is Neither inactivation nor afterpotential protein C (ninaC) from Drosophila melanogaster (Fruit fly).